Reading from the N-terminus, the 313-residue chain is tRNA dimethylallyltransferase (313 aa).

10–17 provides a ligand contact to ATP; sequence GPTAVGKS. 12–17 serves as a coordination point for substrate; that stretch reads TAVGKS. The segment at 35–38 is interaction with substrate tRNA; that stretch reads DSTQ.

Belongs to the IPP transferase family. As to quaternary structure, monomer. The cofactor is Mg(2+).

It carries out the reaction adenosine(37) in tRNA + dimethylallyl diphosphate = N(6)-dimethylallyladenosine(37) in tRNA + diphosphate. Its function is as follows. Catalyzes the transfer of a dimethylallyl group onto the adenine at position 37 in tRNAs that read codons beginning with uridine, leading to the formation of N6-(dimethylallyl)adenosine (i(6)A). In Oceanobacillus iheyensis (strain DSM 14371 / CIP 107618 / JCM 11309 / KCTC 3954 / HTE831), this protein is tRNA dimethylallyltransferase.